The following is an 803-amino-acid chain: Regulatory protein SWI6 (803 aa).

Acidic residues predominate over residues glutamate 108–aspartate 117. The segment at glutamate 108–leucine 150 is disordered. A compositionally biased stretch (basic and acidic residues) spans proline 118 to serine 138. Over residues serine 139–serine 149 the composition is skewed to polar residues. Serine 149 carries the phosphoserine modification. Serine 160 carries the phosphoserine; by CDC28 modification. 2 disordered regions span residues threonine 169 to glycine 212 and proline 266 to glutamine 288. Position 176 is a phosphoserine (serine 176). 2 positions are modified to phosphothreonine: threonine 179 and threonine 182. Over residues asparagine 270 to glutamine 288 the composition is skewed to low complexity. 5 ANK repeats span residues glycine 318–tyrosine 346, glycine 347–leucine 383, glutamate 384–asparagine 469, glycine 470–isoleucine 498, and alanine 499–serine 514. The disordered stretch occupies residues glycine 512 to glycine 540. Over residues serine 514 to aspartate 523 the composition is skewed to polar residues. A compositionally biased stretch (basic and acidic residues) spans glutamate 524–lysine 538. Serine 547 carries the post-translational modification Phosphoserine.

Component of the transcription complex MCB-binding factor (MBF) composed of SWI6 and MBP1. Component of the transcription complex SCB-binding factor (SBF) composed of SWI6 and SWI4. Interacts with MSA1 and STB1. Post-translationally, phosphorylated by CDC28 and dephosphorylated by CDC14.

It localises to the nucleus. It is found in the cytoplasm. Functionally, part of a complex involved in cell-cycle-dependent transcription. SWI4 and SWI6 are required for formation of the cell-cycle box factor-DNA complex. The repeated element in the upstream region of HO (5'-CACGAAAA-3') is called the cell cycle box (CCB). The sequence is that of Regulatory protein SWI6 (SWI6) from Saccharomyces cerevisiae (strain ATCC 204508 / S288c) (Baker's yeast).